Reading from the N-terminus, the 261-residue chain is Imidazole glycerol phosphate synthase subunit HisF (261 aa).

Residues Asp-16 and Asp-135 contribute to the active site.

This sequence belongs to the HisA/HisF family. As to quaternary structure, heterodimer of HisH and HisF.

It is found in the cytoplasm. It carries out the reaction 5-[(5-phospho-1-deoxy-D-ribulos-1-ylimino)methylamino]-1-(5-phospho-beta-D-ribosyl)imidazole-4-carboxamide + L-glutamine = D-erythro-1-(imidazol-4-yl)glycerol 3-phosphate + 5-amino-1-(5-phospho-beta-D-ribosyl)imidazole-4-carboxamide + L-glutamate + H(+). The protein operates within amino-acid biosynthesis; L-histidine biosynthesis; L-histidine from 5-phospho-alpha-D-ribose 1-diphosphate: step 5/9. In terms of biological role, IGPS catalyzes the conversion of PRFAR and glutamine to IGP, AICAR and glutamate. The HisF subunit catalyzes the cyclization activity that produces IGP and AICAR from PRFAR using the ammonia provided by the HisH subunit. This is Imidazole glycerol phosphate synthase subunit HisF from Mycobacterium sp. (strain JLS).